The sequence spans 220 residues: Large ribosomal subunit protein uL4 (220 aa).

The interval 45–102 (AARQGTHKTKTRGEVRGGGRKPFRQKGTGRARQGSIRAPHYTGGGTVHGPVPRDYSQR) is disordered. Over residues 62–73 (GGRKPFRQKGTG) the composition is skewed to basic residues.

The protein belongs to the universal ribosomal protein uL4 family. As to quaternary structure, part of the 50S ribosomal subunit.

Functionally, one of the primary rRNA binding proteins, this protein initially binds near the 5'-end of the 23S rRNA. It is important during the early stages of 50S assembly. It makes multiple contacts with different domains of the 23S rRNA in the assembled 50S subunit and ribosome. Forms part of the polypeptide exit tunnel. This Corynebacterium aurimucosum (strain ATCC 700975 / DSM 44827 / CIP 107346 / CN-1) (Corynebacterium nigricans) protein is Large ribosomal subunit protein uL4.